The primary structure comprises 143 residues: Putative glycerol transporter Lin0368 (143 aa).

The next 4 helical transmembrane spans lie at 6-26, 27-47, 60-80, and 90-110; these read GMIG…PLAE, NYGI…MWFM, AAFV…DVFM, and LPTI…AAAI. The disordered stretch occupies residues 118-143; it reads HEAKQEKTEPGMNIKEEERLNENQLV.

It is found in the membrane. Could be involved in the glycerol uptake either via facilitated diffusion or active transport. This Listeria innocua serovar 6a (strain ATCC BAA-680 / CLIP 11262) protein is Putative glycerol transporter Lin0368.